We begin with the raw amino-acid sequence, 131 residues long: Interleukin-13 (131 aa).

A signal peptide spans 1-18; that stretch reads MALWLTLVIALTCFGGLA. 4 N-linked (GlcNAc...) asparagine glycosylation sites follow: asparagine 39, asparagine 50, asparagine 58, and asparagine 74. 2 cysteine pairs are disulfide-bonded: cysteine 49–cysteine 78 and cysteine 66–cysteine 92.

Belongs to the IL-4/IL-13 family. In terms of assembly, interacts with IL13RA2.

Its subcellular location is the secreted. Functionally, cytokine that plays important roles in allergic inflammation and immune response to parasite infection. Synergizes with IL2 in regulating interferon-gamma synthesis. Stimulates B-cell proliferation, and activation of eosinophils, basophils, and mast cells. Plays an important role in controlling IL33 activity by modulating the production of transmembrane and soluble forms of interleukin-1 receptor-like 1/IL1RL1. Displays the capacity to antagonize Th1-driven proinflammatory immune response and downregulates synthesis of many proinflammatory cytokines including IL1, IL6, IL10, IL12 and TNF-alpha through a mechanism that partially involves suppression of NF-kappa-B. Also functions on nonhematopoietic cells, including endothelial cells where it induces vascular cell adhesion protein 1/VCAM1, which is important in the recruitment of eosinophils. Exerts its biological effects through its receptors which comprises the IL4R chain and the IL13RA1 chain, to activate JAK1 and TYK2, leading to the activation of STAT6. Aside from IL13RA1, another receptor IL13RA2 acts as a high affinity decoy for IL13 and mediates internalization and depletion of extracellular IL13. In Sus scrofa (Pig), this protein is Interleukin-13 (IL13).